The primary structure comprises 1403 residues: DNA-directed RNA polymerase subunit beta' (1403 aa).

Residues C70, C72, C85, and C88 each coordinate Zn(2+). Mg(2+)-binding residues include D460, D462, and D464. Zn(2+) is bound by residues C814, C888, C895, and C898. The interval 1369 to 1403 (RRKRRMLEQPESLTADTGTSHYGEDEISESGAATA) is disordered. Over residues 1379-1388 (ESLTADTGTS) the composition is skewed to polar residues.

It belongs to the RNA polymerase beta' chain family. In terms of assembly, the RNAP catalytic core consists of 2 alpha, 1 beta, 1 beta' and 1 omega subunit. When a sigma factor is associated with the core the holoenzyme is formed, which can initiate transcription. It depends on Mg(2+) as a cofactor. The cofactor is Zn(2+).

It catalyses the reaction RNA(n) + a ribonucleoside 5'-triphosphate = RNA(n+1) + diphosphate. In terms of biological role, DNA-dependent RNA polymerase catalyzes the transcription of DNA into RNA using the four ribonucleoside triphosphates as substrates. The sequence is that of DNA-directed RNA polymerase subunit beta' from Nitrosococcus oceani (strain ATCC 19707 / BCRC 17464 / JCM 30415 / NCIMB 11848 / C-107).